The following is a 382-amino-acid chain: Ribosomal RNA large subunit methyltransferase F (382 aa).

Disordered regions lie at residues 1-53 (MTKP…LHRD) and 269-288 (NRASKGHKLEPKAPKDKSQL). Residues 8 to 24 (ASRKPVTKSGRNSKRSR) show a composition bias toward basic residues. Residues 269–286 (NRASKGHKLEPKAPKDKS) show a composition bias toward basic and acidic residues.

Belongs to the methyltransferase superfamily. METTL16/RlmF family.

It is found in the cytoplasm. The catalysed reaction is adenosine(1618) in 23S rRNA + S-adenosyl-L-methionine = N(6)-methyladenosine(1618) in 23S rRNA + S-adenosyl-L-homocysteine + H(+). Functionally, specifically methylates the adenine in position 1618 of 23S rRNA. This Shewanella woodyi (strain ATCC 51908 / MS32) protein is Ribosomal RNA large subunit methyltransferase F.